Consider the following 422-residue polypeptide: 5'-deoxyadenosine deaminase (422 aa).

His-57 and His-59 together coordinate Zn(2+). 2 residues coordinate substrate: Glu-86 and His-178. His-205 is a Zn(2+) binding site. 2 residues coordinate substrate: Glu-208 and Asp-294. Residue Asp-294 coordinates Zn(2+).

The protein belongs to the metallo-dependent hydrolases superfamily. MTA/SAH deaminase family. In terms of assembly, homotetramer. Zn(2+) serves as cofactor.

It carries out the reaction 5'-deoxyadenosine + H2O + H(+) = 5'-deoxyinosine + NH4(+). It catalyses the reaction S-adenosyl-L-homocysteine + H2O + H(+) = S-inosyl-L-homocysteine + NH4(+). The catalysed reaction is S-methyl-5'-thioadenosine + H2O + H(+) = S-methyl-5'-thioinosine + NH4(+). The enzyme catalyses adenosine + H2O + H(+) = inosine + NH4(+). The protein operates within amino-acid biosynthesis; S-adenosyl-L-methionine biosynthesis. Catalyzes the deamination of three SAM-derived enzymatic products, namely 5'-deoxyadenosine, S-adenosyl-L-homocysteine, and 5'-methylthioadenosine, to produce the inosine analogs. Can also deaminate adenosine. The preferred substrate for this enzyme is 5'-deoxyadenosine, but all these substrates are efficiently deaminated. Likely functions in a S-adenosyl-L-methionine (SAM) recycling pathway from S-adenosyl-L-homocysteine (SAH) produced from SAM-dependent methylation reactions. May also be involved in the recycling of 5'-deoxyadenosine, whereupon the 5'-deoxyribose moiety of 5'-deoxyinosine is further metabolized to deoxyhexoses used for the biosynthesis of aromatic amino acids in methanogens. The polypeptide is 5'-deoxyadenosine deaminase (Methanococcus maripaludis (strain C6 / ATCC BAA-1332)).